The chain runs to 195 residues: Imidazoleglycerol-phosphate dehydratase (195 aa).

Belongs to the imidazoleglycerol-phosphate dehydratase family.

The protein localises to the cytoplasm. It carries out the reaction D-erythro-1-(imidazol-4-yl)glycerol 3-phosphate = 3-(imidazol-4-yl)-2-oxopropyl phosphate + H2O. Its pathway is amino-acid biosynthesis; L-histidine biosynthesis; L-histidine from 5-phospho-alpha-D-ribose 1-diphosphate: step 6/9. The chain is Imidazoleglycerol-phosphate dehydratase from Geobacter metallireducens (strain ATCC 53774 / DSM 7210 / GS-15).